We begin with the raw amino-acid sequence, 225 residues long: uncharacterized protein (225 aa).

This is an uncharacterized protein from Methanocaldococcus jannaschii (strain ATCC 43067 / DSM 2661 / JAL-1 / JCM 10045 / NBRC 100440) (Methanococcus jannaschii).